The chain runs to 335 residues: MPTPLALLLSAILIIGTYFAMPFWPFRKSNYDPRGKHCYITGGSSGLGKALAERLVKQGAHVTIVGRDSKKAEGVVEELKAIAAPGQIIQCIAADLTSPIASTNAIHAACKPHADQAPDYVYLCAGFSRPKLFVETTKQELKDGLDGVYWVSAYTAHEACQMMSKQRRTGKIIFVASFLSYVSFAGYSSYSPAKYALRGLSDALRSEMLLHNIDIHIFLPCGISGPGFDAENRTKPAVTKKIEEGDTPITPDVCAAALESGLKKGYYQITDNLVTEPIRLRSNGGVPTNNFLLDTLWLIVSSVGVPIWRMTADSAVRSFRAKVEKELEAKGYYVS.

Residues glycine 42, serine 44, serine 45, glycine 46, arginine 67, aspartate 68, lysine 71, aspartate 95, and leucine 96 each coordinate NADPH. The GXSXG signature appears at 42–46 (GGSSG). The interval 141-207 (LKDGLDGVYW…RGLSDALRSE (67 aa)) is involved in homodimer formation. Tyrosine 190 acts as the Proton acceptor in catalysis. NADP(+) is bound by residues tyrosine 190, lysine 194, and isoleucine 223. The active-site Lowers pKa of active site Tyr is lysine 194. The chain crosses the membrane as a helical span at residues 288–308 (TNNFLLDTLWLIVSSVGVPIW).

It belongs to the short-chain dehydrogenases/reductases (SDR) family. Homodimer; a minor portion forms homotetramers.

It is found in the endoplasmic reticulum membrane. The enzyme catalyses sphinganine + NADP(+) = 3-oxosphinganine + NADPH + H(+). It participates in lipid metabolism; sphingolipid metabolism. Its function is as follows. Catalyzes the reduction of 3'-oxosphinganine (3-ketodihydrosphingosine/KDS) to sphinganine (dihydrosphingosine/DHS), the second step of de novo sphingolipid biosynthesis. The polypeptide is 3-ketodihydrosphingosine reductase TSC10 (TSC10) (Cryptococcus neoformans var. neoformans serotype D (strain JEC21 / ATCC MYA-565) (Filobasidiella neoformans)).